The primary structure comprises 356 residues: Dual-specificity RNA methyltransferase RlmN (356 aa).

The active-site Proton acceptor is Glu89. Positions 108–341 (SHARYTICVS…CTIRESKGLD (234 aa)) constitute a Radical SAM core domain. The cysteines at positions 115 and 346 are disulfide-linked. [4Fe-4S] cluster is bound by residues Cys122, Cys126, and Cys129. S-adenosyl-L-methionine is bound by residues 172–173 (GE), Ser204, 227–229 (SLH), and Asn303. Cys346 serves as the catalytic S-methylcysteine intermediate.

The protein belongs to the radical SAM superfamily. RlmN family. It depends on [4Fe-4S] cluster as a cofactor.

It localises to the cytoplasm. The enzyme catalyses adenosine(2503) in 23S rRNA + 2 reduced [2Fe-2S]-[ferredoxin] + 2 S-adenosyl-L-methionine = 2-methyladenosine(2503) in 23S rRNA + 5'-deoxyadenosine + L-methionine + 2 oxidized [2Fe-2S]-[ferredoxin] + S-adenosyl-L-homocysteine. The catalysed reaction is adenosine(37) in tRNA + 2 reduced [2Fe-2S]-[ferredoxin] + 2 S-adenosyl-L-methionine = 2-methyladenosine(37) in tRNA + 5'-deoxyadenosine + L-methionine + 2 oxidized [2Fe-2S]-[ferredoxin] + S-adenosyl-L-homocysteine. Its function is as follows. Specifically methylates position 2 of adenine 2503 in 23S rRNA and position 2 of adenine 37 in tRNAs. m2A2503 modification seems to play a crucial role in the proofreading step occurring at the peptidyl transferase center and thus would serve to optimize ribosomal fidelity. The chain is Dual-specificity RNA methyltransferase RlmN from Campylobacter jejuni subsp. jejuni serotype O:23/36 (strain 81-176).